Consider the following 149-residue polypeptide: Large ribosomal subunit protein uL11 (149 aa).

This sequence belongs to the universal ribosomal protein uL11 family. As to quaternary structure, part of the ribosomal stalk of the 50S ribosomal subunit. Interacts with L10 and the large rRNA to form the base of the stalk. L10 forms an elongated spine to which L12 dimers bind in a sequential fashion forming a multimeric L10(L12)X complex. Post-translationally, one or more lysine residues are methylated.

Its function is as follows. Forms part of the ribosomal stalk which helps the ribosome interact with GTP-bound translation factors. The chain is Large ribosomal subunit protein uL11 from Methylobacterium radiotolerans (strain ATCC 27329 / DSM 1819 / JCM 2831 / NBRC 15690 / NCIMB 10815 / 0-1).